The chain runs to 718 residues: DNA ligase (718 aa).

NAD(+) contacts are provided by residues 44–48, 93–94, and Glu127; these read DADYD and SL. Lys129 acts as the N6-AMP-lysine intermediate in catalysis. Arg150, Glu186, Lys302, and Lys326 together coordinate NAD(+). Cys432, Cys435, Cys456, and Cys462 together coordinate Zn(2+). The region spanning 640 to 718 is the BRCT domain; that stretch reads TAGSPVAGKT…EDQWLALISG (79 aa).

The protein belongs to the NAD-dependent DNA ligase family. LigA subfamily. The cofactor is Mg(2+). It depends on Mn(2+) as a cofactor.

It catalyses the reaction NAD(+) + (deoxyribonucleotide)n-3'-hydroxyl + 5'-phospho-(deoxyribonucleotide)m = (deoxyribonucleotide)n+m + AMP + beta-nicotinamide D-nucleotide.. Functionally, DNA ligase that catalyzes the formation of phosphodiester linkages between 5'-phosphoryl and 3'-hydroxyl groups in double-stranded DNA using NAD as a coenzyme and as the energy source for the reaction. It is essential for DNA replication and repair of damaged DNA. The chain is DNA ligase from Rhizobium johnstonii (strain DSM 114642 / LMG 32736 / 3841) (Rhizobium leguminosarum bv. viciae).